The sequence spans 192 residues: Fe/S biogenesis protein NfuA (192 aa).

[4Fe-4S] cluster contacts are provided by Cys-149 and Cys-152.

The protein belongs to the NfuA family. As to quaternary structure, homodimer. [4Fe-4S] cluster serves as cofactor.

Its function is as follows. Involved in iron-sulfur cluster biogenesis. Binds a 4Fe-4S cluster, can transfer this cluster to apoproteins, and thereby intervenes in the maturation of Fe/S proteins. Could also act as a scaffold/chaperone for damaged Fe/S proteins. In Shewanella oneidensis (strain ATCC 700550 / JCM 31522 / CIP 106686 / LMG 19005 / NCIMB 14063 / MR-1), this protein is Fe/S biogenesis protein NfuA.